Consider the following 857-residue polypeptide: RNA-directed RNA polymerase 2a (857 aa).

One can recognise a RdRp catalytic domain in the interval 511–624 (KYCLEIDLSK…FSQLPPVGDS (114 aa)). Residues 775–857 (RKKHGIERRC…PCERGEGTRA (83 aa)) are disordered. 2 stretches are compositionally biased toward polar residues: residues 804–816 (KVSQ…TRSQ) and 824–840 (FKSQ…SGRS).

Belongs to the ssRNA positive-strand viruses RNA-directed RNA polymerase family. In terms of assembly, interacts with replication protein 1a.

It catalyses the reaction RNA(n) + a ribonucleoside 5'-triphosphate = RNA(n+1) + diphosphate. Its function is as follows. RNA-dependent RNA polymerase which replicates the viral genome composed of 3 RNA segments, RNA1, RNA2 and RNA3. The sequence is that of RNA-directed RNA polymerase 2a from Cucumber mosaic virus (strain B) (CMV).